The sequence spans 82 residues: Hepcidin (82 aa).

The N-terminal stretch at 1 to 23 (MALSVQIRAACLLLLLLVSLTAG) is a signal peptide. A propeptide spanning residues 24-53 (SVLPSQTRQLTDLRTQDTAGATAGLTPVAQ) is cleaved from the precursor. 4 disulfides stabilise this stretch: Cys-64/Cys-80, Cys-67/Cys-70, Cys-68/Cys-76, and Cys-71/Cys-79.

It belongs to the hepcidin family. Interacts with SLC40A1; this interaction promotes SLC40A1 rapid ubiquitination.

Its subcellular location is the secreted. Liver-produced hormone that constitutes the main circulating regulator of iron absorption and distribution across tissues. Acts by promoting endocytosis and degradation of ferroportin/SLC40A1, leading to the retention of iron in iron-exporting cells and decreased flow of iron into plasma. Controls the major flows of iron into plasma: absorption of dietary iron in the intestine, recycling of iron by macrophages, which phagocytose old erythrocytes and other cells, and mobilization of stored iron from hepatocytes. Functionally, has strong antimicrobial activity against E.coli ML35P N.cinerea and weaker against S.epidermidis, S.aureus and group b streptococcus bacteria. Active against the fungus C.albicans. No activity against P.aeruginosa. This chain is Hepcidin (HAMP), found in Sus scrofa (Pig).